The chain runs to 319 residues: MARASKKTARGRAAPKLAKVGRGELVTLIDYVRYSVSRFNEAKLAFAHGTTDPVAEAAFLVCEALHLHPDQFEAFAHARVTAAEGKTLLDLIHQRVTTRKPAAYLVNKIYMRGLPFYVDERVIVPRSYIGELLDSHFGGDGEAGSLIDHPTAVERVLDLCTGSGCLAILAAYHFPNATVDAVDISKGALEVAARNVGEHGLDERVTLHRGDLFAPLGDNRYDLIITNPPYVDAEGMAALPPECRAEPKLAFDGGVDGLDVVRRILRDAPEHLTPDGGLICEIGRGRELVDEAFPELPLLWLDTEDSEGEVFWIAAADLD.

It belongs to the protein N5-glutamine methyltransferase family. PrmB subfamily.

It catalyses the reaction L-glutaminyl-[ribosomal protein uL3] + S-adenosyl-L-methionine = N(5)-methyl-L-glutaminyl-[ribosomal protein uL3] + S-adenosyl-L-homocysteine + H(+). Its function is as follows. Methylates large ribosomal subunit protein uL3 on a specific glutamine residue. In Bradyrhizobium diazoefficiens (strain JCM 10833 / BCRC 13528 / IAM 13628 / NBRC 14792 / USDA 110), this protein is Ribosomal protein uL3 glutamine methyltransferase.